The primary structure comprises 718 residues: ADP-ribosylation factor-binding protein GGA3 (718 aa).

One can recognise a VHS domain in the interval 16-146 (ATNPSNRQED…MLKRQGIVQS (131 aa)). Phosphoserine occurs at positions 159 and 275. The region spanning 171–298 (DEEKSKLLAR…VINSYKTIIE (128 aa)) is the GAT domain. The segment at 299–588 (GQIVNGEVTT…VHVPLESIKP (290 aa)) is unstructured hinge. 2 stretches are compositionally biased toward low complexity: residues 334 to 350 (APSN…SGIP) and 360 to 369 (GPPRSRSSSQ). The segment at 334–381 (APSNSSPALAPPTSGIPILPPPPQTSGPPRSRSSSQAEAPPGSDSTNN) is disordered. The Autoinhibitory motif lies at 387–391 (DEELL). Disordered stretches follow at residues 395 to 455 (LTDP…MSQA) and 477 to 506 (SFMF…STSH). Residues 589-710 (SSALPVTAYD…TELGEVDQFP (122 aa)) enclose the GAE domain.

Belongs to the GGA protein family. As to quaternary structure, monomer. Interacts with GGA1 and GGA2. Binds to clathrin and activated ARFs, such as ARF1, ARF5 and ARF6. Binds RABEP1 and RABGEF1. Interacts with the membrane proteins M6PR/CD-MPR and IGF2R/CI-MPR and the accessory proteins SYNRG, EPN4, NECAP1, NECAP2 and AFTPH/aftiphilin. Interacts with TSG101 and UBC. Interacts with ADRA2B. Interacts with NTRK1; the interaction is independent of NTRK1 activation and ubiquitination. Interacts (via VHS domain) with BACE1 (via DXXLL motif). Post-translationally, phosphorylated by CK2 and dephosphorylated by PP2A. Phosphorylation of GGA3 allows the internal DXXLL motif to bind the VHS domain and to inhibit the recognition of cargo signals. In terms of processing, ubiquitinated. Proteolytically cleaved during apoptosis by CASP3.

The protein resides in the golgi apparatus. It localises to the trans-Golgi network membrane. It is found in the endosome membrane. Its subcellular location is the early endosome membrane. The protein localises to the recycling endosome membrane. Plays a role in protein sorting and trafficking between the trans-Golgi network (TGN) and endosomes. Mediates the ARF-dependent recruitment of clathrin to the TGN and binds ubiquitinated proteins and membrane cargo molecules with a cytosolic acidic cluster-dileucine (DXXLL) motif. Functionally, plays a role in protein sorting and trafficking between the trans-Golgi network (TGN) and endosomes. Mediates the ARF-dependent recruitment of clathrin to the TGN and binds ubiquitinated proteins and membrane cargo molecules with a cytosolic acidic cluster-dileucine (DXXLL) motif. Mediates export of the GPCR receptor ADRA2B to the cell surface. Involved in BACE1 transport and sorting as well as regulation of BACE1 protein levels. Regulates retrograde transport of BACE1 from endosomes to the trans-Golgi network via interaction through the VHS motif and dependent of BACE1 phosphorylation. Modulates BACE1 protein levels independently of the interaction between VHS domain and DXXLL motif through recognition of ubiquitination. Key player in a novel DXXLL-mediated endosomal sorting machinery to the recycling pathway that targets NTRK1 to the plasma membrane. This Mus musculus (Mouse) protein is ADP-ribosylation factor-binding protein GGA3 (Gga3).